Consider the following 547-residue polypeptide: Chaperonin GroEL (547 aa).

ATP contacts are provided by residues 30–33 (TLGP), Lys-51, 87–91 (DGTTT), Gly-415, and Asp-496. The interval 528 to 547 (KEGAAPAGGMPDMGGMGGMM) is disordered. Over residues 538-547 (PDMGGMGGMM) the composition is skewed to gly residues.

The protein belongs to the chaperonin (HSP60) family. As to quaternary structure, forms a cylinder of 14 subunits composed of two heptameric rings stacked back-to-back. Interacts with the co-chaperonin GroES.

The protein localises to the cytoplasm. The catalysed reaction is ATP + H2O + a folded polypeptide = ADP + phosphate + an unfolded polypeptide.. Functionally, together with its co-chaperonin GroES, plays an essential role in assisting protein folding. The GroEL-GroES system forms a nano-cage that allows encapsulation of the non-native substrate proteins and provides a physical environment optimized to promote and accelerate protein folding. The polypeptide is Chaperonin GroEL (Ruegeria sp. (strain TM1040) (Silicibacter sp.)).